Here is a 333-residue protein sequence, read N- to C-terminus: MDQLPAAELTNFISPSGPESRPVFHSICGIHDTANVQQKQTLDQNKVISAPLDYLLSFPGKDIRGQLISSFNEWLQIPEEKLSLIKRVVELLHTASLLIDDIQDSSQLRRGLPVAHNIFGVAQTINSANYAYFKAQSELHKIGDPRAVEIFTEELLRLHKGQGMDLYWRDSLTCPTEEEYLEMVSNKTGGLFRLAIKLMQLCSASEKDCVPLVEYLGIIFQIRDDYQNLQSEKYIENKGFGEDLTEGKFSFPIIHSIRSNSDSFQLINILKQKSEDTTVKLYAIKLLESTGSFEFCRQRIAQLTTQARSLLMEMGDPSQTAGIQGILAFLELK.

Positions 61, 64, and 93 each coordinate isopentenyl diphosphate. Positions 100 and 104 each coordinate Mg(2+). Arg-109 is a dimethylallyl diphosphate binding site. Arg-110 serves as a coordination point for isopentenyl diphosphate. Residues Lys-187, Thr-188, and Gln-221 each contribute to the dimethylallyl diphosphate site. Asp-224 contributes to the Mg(2+) binding site. Asn-228, Lys-238, and Lys-248 together coordinate dimethylallyl diphosphate.

Belongs to the FPP/GGPP synthase family. Requires Mg(2+) as cofactor.

The catalysed reaction is isopentenyl diphosphate + dimethylallyl diphosphate = (2E)-geranyl diphosphate + diphosphate. The enzyme catalyses isopentenyl diphosphate + (2E)-geranyl diphosphate = (2E,6E)-farnesyl diphosphate + diphosphate. It catalyses the reaction isopentenyl diphosphate + (2E,6E)-farnesyl diphosphate = (2E,6E,10E)-geranylgeranyl diphosphate + diphosphate. The protein operates within secondary metabolite biosynthesis; terpenoid biosynthesis. Geranylgeranyl pyrophosphate synthase; part of the gene cluster that mediates the biosynthesis of 15-deoxyoxalicine B. The first step of the pathway is the synthesis of nicotinyl-CoA from nicotinic acid by the nicotinic acid-CoA ligase olcI. Nicotinyl-CoA is then a substrate of polyketide synthase olcA to produce 4-hydroxy-6-(3-pyridinyl)-2H-pyran-2-one (HPPO) which is further prenylated by the polyprenyl transferase olcH to yield geranylgeranyl-HPPO. Geranylgeranyl pyrophosphate is provided by the cluster-specific geranylgeranyl pyrophosphate synthase olcC. The FAD-dependent monooxygenase olcE catalyzes the epoxidation of geranylgeranyl-HPPO and the terpene cyclase olcD catalyzes the cyclization of the terpenoid component, resulting in the formation of the tricyclic terpene moiety seen in predecaturin E. The cytochrome P450 monooxygenase then catalyzes the allylic oxidation of predecaturin E, which is followed by spirocylization with concomitant loss of one molecule of water to form decaturin E. Decaturin E is the substrate of the cytochrome P450 monooxygenase olcJ which hydroxylates it at the C-29 position to form decaturin F. The short-chain dehydrogenase/reductase olcF may catalyze the oxidation of decaturin F to generate the 29-hydroxyl-27-one intermediate, and subsequent hemiacetal formation probably leads to the formation of decaturin C. The dioxygenase olcK may be a peroxisomal enzyme that catalyzes the hydroxylation of decaturin C into decaturin A once decaturin C is shuttled into the peroxisome by the MFS transporter olcL. Finally the cytochrome P450 monooxygenase olcB catalyzes the oxidative rearrangement to yield 15-deoxyoxalicine B. In the absence of olcJ, decaturin E may be shunted to a pathway in which it is oxidized to a ketone, possibly by olcF, to form decaturin D, which undergoes further allylic oxidation to yield decaturin G. Moreover, in the absence of oclK or oclL, oclB can convert decaturin C into 15-deoxyoxalicine A. The protein is Geranylgeranyl pyrophosphate synthase olcC of Penicillium canescens.